A 395-amino-acid chain; its full sequence is Calsequestrin-1 (395 aa).

The signal sequence occupies residues 1–28 (MNAADRMGARVALLLLLVLGSPQSGVHG). Phosphotyrosine is present on Tyr37. The residue at position 75 (Ser75) is a Phosphoserine. Thr118 is modified (phosphothreonine). A Phosphoserine modification is found at Ser210. N-linked (GlcNAc...) asparagine glycosylation occurs at Asn344. The segment at 376-395 (EGEINTEDDDDEDDDDDDDD) is disordered.

It belongs to the calsequestrin family. In terms of assembly, monomer; increases in response to a depletion of intracellular calcium. Homodimer. Homotetramer and homopolymer. Can form linear homooligomers. Ca(2+) ions promote oligomerization. Interacts (via C-terminal end and preferentially with the monomeric form) with STIM1; this interaction increases in response to a depletion of intracellular calcium, decreases both STIM1 aggregation and clustering, interaction of STIM1 with ORAI1 and store-operated Ca(2+) entry (SOCE) activity. Interacts with ASPH and TRDN. In terms of processing, N-glycosylated. In terms of tissue distribution, detected in skeletal muscle (at protein level). Detected in skeletal muscle.

Its subcellular location is the endoplasmic reticulum. It localises to the sarcoplasmic reticulum. The protein resides in the sarcoplasmic reticulum lumen. It is found in the mitochondrion matrix. The protein localises to the sarcoplasmic reticulum membrane. In terms of biological role, calsequestrin is a high-capacity, moderate affinity, calcium-binding protein and thus acts as an internal calcium store in muscle. Calcium ions are bound by clusters of acidic residues at the protein surface, often at the interface between subunits. Can bind around 80 Ca(2+) ions. Regulates the release of lumenal Ca(2+) via the calcium release channel RYR1; this plays an important role in triggering muscle contraction. Negatively regulates store-operated Ca(2+) entry (SOCE) activity. The chain is Calsequestrin-1 (CASQ1) from Oryctolagus cuniculus (Rabbit).